The chain runs to 245 residues: Thiopurine S-methyltransferase (245 aa).

A Phosphoserine modification is found at serine 14. Residue 29–40 (WQDKWVNGKTAF) participates in S-adenosyl-L-methionine binding. Phenylalanine 40 is a substrate binding site. Lysine 58 carries the N6-acetyllysine modification. Residues leucine 69, glutamate 90, 134 to 135 (SI), and arginine 152 contribute to the S-adenosyl-L-methionine site.

The protein belongs to the class I-like SAM-binding methyltransferase superfamily. TPMT family. As to quaternary structure, monomer.

The protein localises to the cytoplasm. It catalyses the reaction S-adenosyl-L-methionine + a thiopurine = S-adenosyl-L-homocysteine + a thiopurine S-methylether.. The catalysed reaction is mercaptopurine + S-adenosyl-L-methionine = 6-methylthiopurine + S-adenosyl-L-homocysteine + H(+). The enzyme catalyses 6-thioguanine + S-adenosyl-L-methionine = 6-methylthioguanine + S-adenosyl-L-homocysteine + H(+). Its activity is regulated as follows. Inhibited by S-adenosyl-L-homocysteine (SAH). Its function is as follows. Catalyzes the S-methylation of thiopurine drugs such as 6-mercaptopurine (also called mercaptopurine, 6-MP or its brand name Purinethol) and 6-thioguanine (also called tioguanine or 6-TG) using S-adenosyl-L-methionine as the methyl donor. TPMT activity modulates the cytotoxic effects of thiopurine prodrugs. A natural substrate for this enzyme has yet to be identified. The chain is Thiopurine S-methyltransferase (TPMT) from Homo sapiens (Human).